Reading from the N-terminus, the 517-residue chain is GMP synthase [glutamine-hydrolyzing] (517 aa).

One can recognise a Glutamine amidotransferase type-1 domain in the interval 9 to 199; the sequence is RILILDFGSQ…VLNACGCEGL (191 aa). The Nucleophile role is filled by Cys86. Residues His173 and Glu175 contribute to the active site. The GMPS ATP-PPase domain occupies 200–392; sequence WTSASIIEDA…LGLPYNMLYR (193 aa). Residue 227–233 participates in ATP binding; sequence SGGVDSS.

Homodimer.

It carries out the reaction XMP + L-glutamine + ATP + H2O = GMP + L-glutamate + AMP + diphosphate + 2 H(+). It functions in the pathway purine metabolism; GMP biosynthesis; GMP from XMP (L-Gln route): step 1/1. Functionally, catalyzes the synthesis of GMP from XMP. In Vibrio atlanticus (strain LGP32) (Vibrio splendidus (strain Mel32)), this protein is GMP synthase [glutamine-hydrolyzing].